We begin with the raw amino-acid sequence, 244 residues long: Type III pantothenate kinase (244 aa).

Asp-8 to Lys-15 serves as a coordination point for ATP. Substrate-binding positions include Tyr-88 and Gly-94–Arg-97. The active-site Proton acceptor is the Asp-96. A K(+)-binding site is contributed by Asp-117. Thr-120 is a binding site for ATP. Position 175 (Thr-175) interacts with substrate.

Belongs to the type III pantothenate kinase family. Homodimer. NH4(+) is required as a cofactor. K(+) serves as cofactor.

The protein localises to the cytoplasm. The catalysed reaction is (R)-pantothenate + ATP = (R)-4'-phosphopantothenate + ADP + H(+). It participates in cofactor biosynthesis; coenzyme A biosynthesis; CoA from (R)-pantothenate: step 1/5. Its function is as follows. Catalyzes the phosphorylation of pantothenate (Pan), the first step in CoA biosynthesis. This Porphyromonas gingivalis (strain ATCC BAA-308 / W83) protein is Type III pantothenate kinase.